Here is a 92-residue protein sequence, read N- to C-terminus: RNA-binding protein Hfq (92 aa).

A Sm domain is found at 9 to 68 (DPFLNALRRERVPVSVYLVNGIKLQGTIESFDQFVVLLRNTVSQMVYKHAISTVVPARNV). The segment at 72–92 (PGGGYVQSNENNQAEDDDVEQ) is disordered.

It belongs to the Hfq family. In terms of assembly, homohexamer.

RNA chaperone that binds small regulatory RNA (sRNAs) and mRNAs to facilitate mRNA translational regulation in response to envelope stress, environmental stress and changes in metabolite concentrations. Also binds with high specificity to tRNAs. In Xanthomonas campestris pv. campestris (strain 8004), this protein is RNA-binding protein Hfq.